A 91-amino-acid polypeptide reads, in one-letter code: MYHNGMQLHLTRRSGMWHLLVSMGNNSTSVLLESSSSTRRRPRWSYIRRHNQVSILLLVGSNLQWLITIFPNMSQILCQTMPLHFTGCQDI.

Residues 33–51 (ESSSSTRRRPRWSYIRRHN) form a nucleolar localization signal region.

The protein belongs to the orthobunyavirus NS-S protein family.

It localises to the host nucleus. It is found in the host nucleolus. Its function is as follows. Plays a role in the inhibition of the host immune response by interfering with the production of interferon in infected cells. Induces host nucleolar disorganization and host POLR2A/RPB1 degradation leading to host transcriptional shutoff. In Bos taurus (Bovine), this protein is Non-structural protein NS-S (N).